Here is a 208-residue protein sequence, read N- to C-terminus: N-(5'-phosphoribosyl)anthranilate isomerase (208 aa).

Belongs to the TrpF family.

The enzyme catalyses N-(5-phospho-beta-D-ribosyl)anthranilate = 1-(2-carboxyphenylamino)-1-deoxy-D-ribulose 5-phosphate. It participates in amino-acid biosynthesis; L-tryptophan biosynthesis; L-tryptophan from chorismate: step 3/5. This is N-(5'-phosphoribosyl)anthranilate isomerase from Lactiplantibacillus plantarum (strain ATCC BAA-793 / NCIMB 8826 / WCFS1) (Lactobacillus plantarum).